The primary structure comprises 360 residues: UPF0283 membrane protein Asuc_0957 (360 aa).

3 helical membrane passes run 74 to 94 (VIAV…QWLI), 102 to 122 (WIYF…LSAL), and 215 to 235 (AVEN…MLFL).

Belongs to the UPF0283 family.

The protein localises to the cell inner membrane. In Actinobacillus succinogenes (strain ATCC 55618 / DSM 22257 / CCUG 43843 / 130Z), this protein is UPF0283 membrane protein Asuc_0957.